Consider the following 494-residue polypeptide: Cytochrome P450 71D94 (494 aa).

The chain crosses the membrane as a helical; Signal-anchor for type II membrane protein span at residues 1–21 (MELNLLLVIIILVATYTVSLL). Cys434 lines the heme pocket.

This sequence belongs to the cytochrome P450 family. The cofactor is heme.

Its subcellular location is the endoplasmic reticulum membrane. Functionally, cytochrome P450 oxygenase of undefined substrate. Not active with limonene, (+)- or (-)-piperitone, (-)-isopiperitone, piperitenone or (+)-pulegone. In Mentha gracilis (Gingermint), this protein is Cytochrome P450 71D94 (CYP71D94).